Reading from the N-terminus, the 173-residue chain is Alpha-crystallin A chain (173 aa).

Met-1 bears the N-acetylmethionine mark. Residues 1-63 are required for complex formation with BFSP1 and BFSP2; the sequence is MDIAIQHPWF…RTVLDSGISE (63 aa). Deamidated glutamine; partial is present on Gln-6. Ser-45 is modified (phosphoserine). Gln-50 is subject to Deamidated glutamine; partial. The 111-residue stretch at 52-162 folds into the sHSP domain; sequence LFRTVLDSGI…GHSERAIPVS (111 aa). Lys-70 is subject to N6-acetyllysine. Gln-90 is modified (deamidated glutamine; partial). Position 99 is an N6-acetyllysine (Lys-99). His-100 is a binding site for Zn(2+). At Asn-101 the chain carries Deamidated asparagine; partial. Positions 102 and 107 each coordinate Zn(2+). Ser-122 bears the Phosphoserine mark. The residue at position 123 (Asn-123) is a Deamidated asparagine; partial. The disordered stretch occupies residues 144–173; sequence PKVPSGMDAGHSERAIPVSREEKPSSAPSS. Residues 153–167 are compositionally biased toward basic and acidic residues; that stretch reads GHSERAIPVSREEKP. His-154 contacts Zn(2+). O-linked (GlcNAc) serine glycosylation occurs at Ser-162.

It belongs to the small heat shock protein (HSP20) family. In terms of assembly, heteromer composed of three CRYAA and one CRYAB subunits. Inter-subunit bridging via zinc ions enhances stability, which is crucial as there is no protein turn over in the lens. Can also form homodimers and homotetramers (dimers of dimers) which serve as the building blocks of homooligomers. Within homooligomers, the zinc-binding motif is created from residues of 3 different molecules. His-100 and Glu-102 from one molecule are ligands of the zinc ion, and His-107 and His-154 residues from additional molecules complete the site with tetrahedral coordination geometry. Part of a complex required for lens intermediate filament formation composed of BFSP1, BFSP2 and CRYAA. Post-translationally, acetylation at Lys-70 may increase chaperone activity. In terms of processing, undergoes age-dependent proteolytical cleavage at the C-terminus.

It localises to the cytoplasm. It is found in the nucleus. Functionally, contributes to the transparency and refractive index of the lens. Acts as a chaperone, preventing aggregation of various proteins under a wide range of stress conditions. Required for the correct formation of lens intermediate filaments as part of a complex composed of BFSP1, BFSP2 and CRYAA. The protein is Alpha-crystallin A chain (CRYAA) of Balaenoptera acutorostrata (Common minke whale).